The following is an 890-amino-acid chain: Wolframin (890 aa).

At Met-1 the chain carries N-acetylmethionine. Residues Met-1–Ile-86 form a disordered region. The interval Met-1–Thr-321 is interaction with ATP6V1A. The span at Pro-10–Gln-20 shows a compositional bias: pro residues. Position 30 is a phosphothreonine; by FAM20C (Thr-30). Ser-32 bears the Phosphoserine; by FAM20C mark. Ser-157 carries the post-translational modification Phosphoserine. 10 helical membrane-spanning segments follow: residues Trp-314–Ser-334, Phe-340–Cys-360, Leu-402–Ala-422, Ile-427–Leu-447, Ala-465–Gly-485, Leu-496–Phe-516, Cys-529–Leu-549, Tyr-563–Leu-583, Phe-589–Leu-609, and Met-632–Tyr-652. The Lumenal portion of the chain corresponds to Arg-653 to Ser-869. N-linked (GlcNAc...) asparagine glycosylation is found at Asn-661 and Asn-746. The helical transmembrane segment at Thr-870–Ala-890 threads the bilayer.

As to quaternary structure, interacts with ATP6V1A. In terms of tissue distribution, highly expressed in heart followed by brain, placenta, lung and pancreas. Weakly expressed in liver, kidney and skeletal muscle. Also expressed in islet and beta-cell insulinoma cell line.

The protein localises to the endoplasmic reticulum membrane. It is found in the cytoplasmic vesicle. It localises to the secretory vesicle. Its function is as follows. Participates in the regulation of cellular Ca(2+) homeostasis, at least partly, by modulating the filling state of the endoplasmic reticulum Ca(2+) store. Negatively regulates the ER stress response and positively regulates the stability of V-ATPase subunits ATP6V1A and ATP1B1 by preventing their degradation through an unknown proteasome-independent mechanism. This is Wolframin (WFS1) from Homo sapiens (Human).